Here is a 432-residue protein sequence, read N- to C-terminus: NADH-quinone oxidoreductase subunit D (432 aa).

This sequence belongs to the complex I 49 kDa subunit family. In terms of assembly, NDH-1 is composed of 14 different subunits. Subunits NuoB, C, D, E, F, and G constitute the peripheral sector of the complex.

It is found in the cell membrane. It catalyses the reaction a quinone + NADH + 5 H(+)(in) = a quinol + NAD(+) + 4 H(+)(out). In terms of biological role, NDH-1 shuttles electrons from NADH, via FMN and iron-sulfur (Fe-S) centers, to quinones in the respiratory chain. The immediate electron acceptor for the enzyme in this species is believed to be a menaquinone. Couples the redox reaction to proton translocation (for every two electrons transferred, four hydrogen ions are translocated across the cytoplasmic membrane), and thus conserves the redox energy in a proton gradient. The sequence is that of NADH-quinone oxidoreductase subunit D from Mycobacteroides abscessus (strain ATCC 19977 / DSM 44196 / CCUG 20993 / CIP 104536 / JCM 13569 / NCTC 13031 / TMC 1543 / L948) (Mycobacterium abscessus).